Consider the following 354-residue polypeptide: tRNA N6-adenosine threonylcarbamoyltransferase (354 aa).

Fe cation contacts are provided by His115 and His119. Substrate-binding positions include 138–142 (LVSGG), Asp171, Gly184, and Asn276. Asp304 provides a ligand contact to Fe cation.

This sequence belongs to the KAE1 / TsaD family. The cofactor is Fe(2+).

The protein resides in the cytoplasm. The enzyme catalyses L-threonylcarbamoyladenylate + adenosine(37) in tRNA = N(6)-L-threonylcarbamoyladenosine(37) in tRNA + AMP + H(+). Its function is as follows. Required for the formation of a threonylcarbamoyl group on adenosine at position 37 (t(6)A37) in tRNAs that read codons beginning with adenine. Is involved in the transfer of the threonylcarbamoyl moiety of threonylcarbamoyl-AMP (TC-AMP) to the N6 group of A37, together with TsaE and TsaB. TsaD likely plays a direct catalytic role in this reaction. The protein is tRNA N6-adenosine threonylcarbamoyltransferase of Xanthomonas oryzae pv. oryzae (strain MAFF 311018).